We begin with the raw amino-acid sequence, 90 residues long: U7-theraphotoxin-Hhn1a 8 (90 aa).

An N-terminal signal peptide occupies residues 1-19 (MKTAIFTVVLALAVFAVLS). A propeptide spanning residues 20-50 (FGWEANEKALSEEFTELIHEKGAASETEARE) is cleaved from the precursor. 3 disulfide bridges follow: Cys-51/Cys-65, Cys-58/Cys-70, and Cys-64/Cys-81.

The protein belongs to the neurotoxin 10 (Hwtx-1) family. 13 (Hntx-13) subfamily. As to expression, expressed by the venom gland.

The protein resides in the secreted. Ion channel inhibitor. This is U7-theraphotoxin-Hhn1a 8 from Cyriopagopus hainanus (Chinese bird spider).